The sequence spans 186 residues: Transcriptional repressor NrdR (186 aa).

A disordered region spans residues 1–24 (MRCPYCGGLDTQVKDSRPSDDASA). A zinc finger spans residues 3–34 (CPYCGGLDTQVKDSRPSDDASAIRRRRICPDC). Positions 12 to 24 (QVKDSRPSDDASA) are enriched in basic and acidic residues. Positions 49–139 (LTVVKRSGRR…VYKNFREARD (91 aa)) constitute an ATP-cone domain. The segment at 146-186 (RLNGAGRPGGEPEPPDEAAPGPAAAPGEGGEAPARRARSRA) is disordered.

The protein belongs to the NrdR family. Zn(2+) serves as cofactor.

In terms of biological role, negatively regulates transcription of bacterial ribonucleotide reductase nrd genes and operons by binding to NrdR-boxes. The protein is Transcriptional repressor NrdR of Methylobacterium sp. (strain 4-46).